We begin with the raw amino-acid sequence, 380 residues long: 1-deoxy-D-xylulose 5-phosphate reductoisomerase (380 aa).

T10, G11, S12, I13, G36, R37, N38, and N120 together coordinate NADPH. K121 is a 1-deoxy-D-xylulose 5-phosphate binding site. E122 serves as a coordination point for NADPH. Residue D146 coordinates Mn(2+). Residues S147, E148, S172, and H195 each contribute to the 1-deoxy-D-xylulose 5-phosphate site. Residue E148 coordinates Mn(2+). G201 is an NADPH binding site. Positions 208, 213, 214, and 217 each coordinate 1-deoxy-D-xylulose 5-phosphate. Residue E217 coordinates Mn(2+).

Belongs to the DXR family. Requires Mg(2+) as cofactor. Mn(2+) is required as a cofactor.

It catalyses the reaction 2-C-methyl-D-erythritol 4-phosphate + NADP(+) = 1-deoxy-D-xylulose 5-phosphate + NADPH + H(+). Its pathway is isoprenoid biosynthesis; isopentenyl diphosphate biosynthesis via DXP pathway; isopentenyl diphosphate from 1-deoxy-D-xylulose 5-phosphate: step 1/6. Its function is as follows. Catalyzes the NADPH-dependent rearrangement and reduction of 1-deoxy-D-xylulose-5-phosphate (DXP) to 2-C-methyl-D-erythritol 4-phosphate (MEP). This chain is 1-deoxy-D-xylulose 5-phosphate reductoisomerase, found in Listeria innocua serovar 6a (strain ATCC BAA-680 / CLIP 11262).